A 645-amino-acid chain; its full sequence is Translation factor GUF1, mitochondrial (645 aa).

The tr-type G domain maps to 44-228 (ENYRNFSIVA…AIIDRIPPPT (185 aa)). Residues 53 to 60 (AHVDHGKS), 120 to 124 (DTPGH), and 174 to 177 (NKID) contribute to the GTP site.

It belongs to the TRAFAC class translation factor GTPase superfamily. Classic translation factor GTPase family. LepA subfamily.

It localises to the mitochondrion inner membrane. The catalysed reaction is GTP + H2O = GDP + phosphate + H(+). Its function is as follows. Promotes mitochondrial protein synthesis. May act as a fidelity factor of the translation reaction, by catalyzing a one-codon backward translocation of tRNAs on improperly translocated ribosomes. Binds to mitochondrial ribosomes in a GTP-dependent manner. The protein is Translation factor GUF1, mitochondrial of Saccharomyces cerevisiae (strain RM11-1a) (Baker's yeast).